We begin with the raw amino-acid sequence, 498 residues long: Dynein regulatory complex subunit 2 (498 aa).

Coiled-coil stretches lie at residues 98-160 (VIKS…RKTI), 250-311 (KDEK…KAQR), and 417-441 (SLRH…QYLD).

The protein belongs to the DRC2 family. As to quaternary structure, component of the nexin-dynein regulatory complex (N-DRC). Interacts with DRC1.

It is found in the cytoplasm. The protein localises to the cytoskeleton. It localises to the flagellum basal body. The protein resides in the cell projection. Its subcellular location is the cilium. It is found in the flagellum. The protein localises to the flagellum axoneme. In terms of biological role, component of the nexin-dynein regulatory complex (N-DRC), a key regulator of ciliary/flagellar motility which maintains the alignment and integrity of the distal axoneme and regulates microtubule sliding in motile axonemes. Plays a critical role in the assembly of N-DRC and also stabilizes the assembly of multiple inner dynein arms and radial spokes. Coassembles with DRC1 to form a central scaffold needed for assembly of the N-DRC and its attachment to the outer doublet microtubules. The sequence is that of Dynein regulatory complex subunit 2 (CCDC65) from Bos taurus (Bovine).